The chain runs to 627 residues: Anti-CBASS protein Acb1 (627 aa).

Residue Tyr105 coordinates 3',3'-cGAMP. Residue Tyr105 coordinates 3',3'-cUAMP. A disordered region spans residues 437-474 (LADQPETESANENTEQPESGEEGEEGQPTRRAANDAKP). Active-site residues include His508, Thr510, His584, and Thr586. Residues Glu614 and Trp620 each contribute to the 3',3'-cGAMP site. Positions 614 and 620 each coordinate 3',3'-cUAMP.

Belongs to the anti-CBASS protein Acb1 family.

It catalyses the reaction 3',3'-cUAMP + H2O = U[3'-5']pAp[3'] + H(+). The enzyme catalyses 3',3',3'-c-tri-AMP + H2O = A[3'-5']pA[3'-5']pAp[3'] + H(+). It carries out the reaction 3',3',3'-cAAG + H2O = G[3'-5']pA[3'-5']pAp[3'] + H(+). The catalysed reaction is 3',3',3'-cAAG + H2O = A[3'-5']pG[3'-5']pAp[3'] + H(+). It catalyses the reaction 3',3'-cGAMP + H2O = G[3'-5']pAp[3'] + H(+). In terms of biological role, counteracts or regulates the endogenous CBASS antiviral defense system. Phosphodiesterase that enables metal-independent hydrolysis of the host cyclic di- and trinucleotide CBASS signals such as 3'3'-cGAMP, 3'3'cUA, and 3'3'3'-cAAA. The polypeptide is Anti-CBASS protein Acb1 (Caulobacter sp. (strain RHG1)).